A 513-amino-acid chain; its full sequence is Lysine--tRNA ligase (513 aa).

Mg(2+)-binding residues include Glu-423 and Glu-430.

The protein belongs to the class-II aminoacyl-tRNA synthetase family. As to quaternary structure, homodimer. Mg(2+) is required as a cofactor.

It is found in the cytoplasm. The enzyme catalyses tRNA(Lys) + L-lysine + ATP = L-lysyl-tRNA(Lys) + AMP + diphosphate. The protein is Lysine--tRNA ligase of Anaeromyxobacter dehalogenans (strain 2CP-C).